Reading from the N-terminus, the 101-residue chain is NAD(P)H-quinone oxidoreductase subunit 4L, chloroplastic (101 aa).

3 helical membrane-spanning segments follow: residues 2-22, 32-52, and 61-81; these read MLEHVLVLSAYLFSIGIYGLI, MCLELILNAVNMNLVTFSDFF, and IFSIFVIAIAAAEAAIGPAIV.

It belongs to the complex I subunit 4L family. As to quaternary structure, NDH is composed of at least 16 different subunits, 5 of which are encoded in the nucleus.

The protein localises to the plastid. The protein resides in the chloroplast thylakoid membrane. The catalysed reaction is a plastoquinone + NADH + (n+1) H(+)(in) = a plastoquinol + NAD(+) + n H(+)(out). It carries out the reaction a plastoquinone + NADPH + (n+1) H(+)(in) = a plastoquinol + NADP(+) + n H(+)(out). NDH shuttles electrons from NAD(P)H:plastoquinone, via FMN and iron-sulfur (Fe-S) centers, to quinones in the photosynthetic chain and possibly in a chloroplast respiratory chain. The immediate electron acceptor for the enzyme in this species is believed to be plastoquinone. Couples the redox reaction to proton translocation, and thus conserves the redox energy in a proton gradient. The protein is NAD(P)H-quinone oxidoreductase subunit 4L, chloroplastic of Lotus japonicus (Lotus corniculatus var. japonicus).